Reading from the N-terminus, the 483-residue chain is Glutamyl-tRNA(Gln) amidotransferase subunit A (483 aa).

Active-site charge relay system residues include Lys-76 and Ser-151. The active-site Acyl-ester intermediate is Ser-175.

This sequence belongs to the amidase family. GatA subfamily. Heterotrimer of A, B and C subunits.

The enzyme catalyses L-glutamyl-tRNA(Gln) + L-glutamine + ATP + H2O = L-glutaminyl-tRNA(Gln) + L-glutamate + ADP + phosphate + H(+). Allows the formation of correctly charged Gln-tRNA(Gln) through the transamidation of misacylated Glu-tRNA(Gln) in organisms which lack glutaminyl-tRNA synthetase. The reaction takes place in the presence of glutamine and ATP through an activated gamma-phospho-Glu-tRNA(Gln). This chain is Glutamyl-tRNA(Gln) amidotransferase subunit A, found in Pseudomonas fluorescens (strain SBW25).